Here is a 237-residue protein sequence, read N- to C-terminus: Cysteine-rich venom protein tigrin (237 aa).

The first 18 residues, Met1–Gly18, serve as a signal peptide directing secretion. Positions Val37–Tyr165 constitute an SCP domain. 8 disulfides stabilise this stretch: Cys74–Cys152, Cys91–Cys166, Cys147–Cys163, Cys185–Cys192, Cys188–Cys197, Cys201–Cys232, Cys210–Cys226, and Cys217–Cys230. The 32-residue stretch at Cys201 to Cys232 folds into the ShKT domain.

The protein belongs to the CRISP family. As to expression, expressed by the venom gland.

It localises to the secreted. This protein does not inhibit smooth muscle contraction elicited by high potassium levels or caffeine. This chain is Cysteine-rich venom protein tigrin, found in Rhabdophis tigrinus tigrinus (Tiger keelback snake).